The sequence spans 101 residues: Small ribosomal subunit protein uS14 (101 aa).

The disordered stretch occupies residues 1 to 26 (MAKVSSIQKNKSRQKKSQSLHNKRSE). Residues 10 to 22 (NKSRQKKSQSLHN) are compositionally biased toward basic residues.

This sequence belongs to the universal ribosomal protein uS14 family. Part of the 30S ribosomal subunit. Contacts proteins S3 and S10.

Its function is as follows. Binds 16S rRNA, required for the assembly of 30S particles and may also be responsible for determining the conformation of the 16S rRNA at the A site. The polypeptide is Small ribosomal subunit protein uS14 (Rickettsia prowazekii (strain Madrid E)).